The chain runs to 453 residues: Acid phosphatase (453 aa).

The first 18 residues, 1-18, serve as a signal peptide directing secretion; that stretch reads MFLQNLFLGFLAVVCANA. Histidine 69 serves as the catalytic Nucleophile. N-linked (GlcNAc...) asparagine glycans are attached at residues asparagine 95, asparagine 151, asparagine 183, asparagine 193, asparagine 243, and asparagine 319. Aspartate 331 acts as the Proton donor in catalysis. N-linked (GlcNAc...) asparagine glycans are attached at residues asparagine 410, asparagine 429, and asparagine 443.

The protein belongs to the histidine acid phosphatase family.

The protein localises to the secreted. It localises to the cell wall. The catalysed reaction is a phosphate monoester + H2O = an alcohol + phosphate. The protein is Acid phosphatase (pho1) of Schizosaccharomyces pombe (strain 972 / ATCC 24843) (Fission yeast).